A 438-amino-acid chain; its full sequence is Chaperone SurA (438 aa).

The signal sequence occupies residues 1–28; the sequence is MKTMNPYIRHLILLICCLGGMLAQPLSA. 2 PpiC domains span residues 181–282 and 292–390; these read EEEY…KLVS and VQQT…QVLE.

It is found in the periplasm. The enzyme catalyses [protein]-peptidylproline (omega=180) = [protein]-peptidylproline (omega=0). In terms of biological role, chaperone involved in the correct folding and assembly of outer membrane proteins. Recognizes specific patterns of aromatic residues and the orientation of their side chains, which are found more frequently in integral outer membrane proteins. May act in both early periplasmic and late outer membrane-associated steps of protein maturation. In Dechloromonas aromatica (strain RCB), this protein is Chaperone SurA.